Here is a 482-residue protein sequence, read N- to C-terminus: tRNA sulfurtransferase (482 aa).

A THUMP domain is found at 61–165 (LTIRDALTRI…DDRLLLIKGR (105 aa)). Residues 183–184 (LI), K265, G287, and Q296 contribute to the ATP site. The cysteines at positions 344 and 456 are disulfide-linked. Residues 404–482 (FGPNDVILDI…GFKNVKVYRP (79 aa)) form the Rhodanese domain. C456 (cysteine persulfide intermediate) is an active-site residue.

Belongs to the ThiI family. In terms of assembly, interacts with IscS.

The protein resides in the cytoplasm. It carries out the reaction [ThiI sulfur-carrier protein]-S-sulfanyl-L-cysteine + a uridine in tRNA + 2 reduced [2Fe-2S]-[ferredoxin] + ATP + H(+) = [ThiI sulfur-carrier protein]-L-cysteine + a 4-thiouridine in tRNA + 2 oxidized [2Fe-2S]-[ferredoxin] + AMP + diphosphate. The catalysed reaction is [ThiS sulfur-carrier protein]-C-terminal Gly-Gly-AMP + S-sulfanyl-L-cysteinyl-[cysteine desulfurase] + AH2 = [ThiS sulfur-carrier protein]-C-terminal-Gly-aminoethanethioate + L-cysteinyl-[cysteine desulfurase] + A + AMP + 2 H(+). It participates in cofactor biosynthesis; thiamine diphosphate biosynthesis. Catalyzes the ATP-dependent transfer of a sulfur to tRNA to produce 4-thiouridine in position 8 of tRNAs, which functions as a near-UV photosensor. Also catalyzes the transfer of sulfur to the sulfur carrier protein ThiS, forming ThiS-thiocarboxylate. This is a step in the synthesis of thiazole, in the thiamine biosynthesis pathway. The sulfur is donated as persulfide by IscS. This is tRNA sulfurtransferase from Escherichia coli O157:H7.